Reading from the N-terminus, the 308-residue chain is Dioxygenase peniF (308 aa).

Residues His-144 and His-225 each coordinate Fe cation.

Belongs to the PhyH family. In terms of assembly, homodimer. Fe cation serves as cofactor.

In terms of biological role, dioxygenase; part of the gene cluster that mediates the biosynthesis of penifulvin A, a potent insecticidal sesquiterpene that features a [5.5.5.6]dioxafenestrane ring. The first step of the pathway is performed by the sesquiterpene cyclase peniA that generates the angular triquinane scaffold silphinene via cyclization of the linear farnesyl pyrophosphate (FPP). The cytochrome P450 monooxygenase peniB and the flavin-dependent monooxygenase peniC then catalyze a series of oxidation reactions to transform silphinene into penifulvin A. The dioxygenases peniD and peniF, as well as the acetyltransferase peniE, do not seem to be involved in the biosynthesis of penifulvin A. This Penicillium patulum (Penicillium griseofulvum) protein is Dioxygenase peniF.